Here is a 629-residue protein sequence, read N- to C-terminus: Putative polypeptide N-acetylgalactosaminyltransferase 10 (629 aa).

The Cytoplasmic portion of the chain corresponds to 1–12; sequence MGLSRYLSRRHH. Residues 13–33 form a helical; Signal-anchor for type II membrane protein membrane-spanning segment; the sequence is WVIQYCALLLFLYFIYSYVAV. Residues 34–629 are Lumenal-facing; sequence SNDAPRLNEE…RQANEHKELE (596 aa). Residues Asn143 and Asn177 are each glycosylated (N-linked (GlcNAc...) asparagine). Intrachain disulfides connect Cys154–Cys385, Cys376–Cys454, Cys493–Cys510, Cys539–Cys556, and Cys582–Cys598. The tract at residues 163-275 is catalytic subdomain A; it reads LPTVSVIFPF…YNWLPPLLDP (113 aa). Asp204 and Arg236 together coordinate substrate. 2 residues coordinate Mn(2+): Asp259 and His261. Residues 331 to 393 form a catalytic subdomain B region; that stretch reads PFDSPVMAGG…PCSRVAHIYR (63 aa). Substrate is bound at residue Trp362. His390 serves as a coordination point for Mn(2+). Arg393 is a binding site for substrate. A flexible loop region spans residues 393–406; it reads RCKYAPFKNAGMGD. Positions 526–629 constitute a Ricin B-type lectin domain; the sequence is TRWHDIRPKG…RQANEHKELE (104 aa).

This sequence belongs to the glycosyltransferase 2 family. GalNAc-T subfamily. Mn(2+) serves as cofactor.

It is found in the golgi apparatus membrane. The catalysed reaction is L-seryl-[protein] + UDP-N-acetyl-alpha-D-galactosamine = a 3-O-[N-acetyl-alpha-D-galactosaminyl]-L-seryl-[protein] + UDP + H(+). It catalyses the reaction L-threonyl-[protein] + UDP-N-acetyl-alpha-D-galactosamine = a 3-O-[N-acetyl-alpha-D-galactosaminyl]-L-threonyl-[protein] + UDP + H(+). The protein operates within protein modification; protein glycosylation. Its function is as follows. May catalyze the initial reaction in O-linked oligosaccharide biosynthesis, the transfer of an N-acetyl-D-galactosamine residue to a serine or threonine residue on the protein receptor. In Caenorhabditis briggsae, this protein is Putative polypeptide N-acetylgalactosaminyltransferase 10.